A 103-amino-acid polypeptide reads, in one-letter code: Large ribosomal subunit protein uL24 (103 aa).

This sequence belongs to the universal ribosomal protein uL24 family. As to quaternary structure, part of the 50S ribosomal subunit.

Functionally, one of two assembly initiator proteins, it binds directly to the 5'-end of the 23S rRNA, where it nucleates assembly of the 50S subunit. Its function is as follows. One of the proteins that surrounds the polypeptide exit tunnel on the outside of the subunit. The polypeptide is Large ribosomal subunit protein uL24 (Enterococcus faecalis (strain ATCC 700802 / V583)).